A 732-amino-acid polypeptide reads, in one-letter code: Iron-sulfur clusters transporter ATM1, mitochondrial (732 aa).

The transit peptide at 1–55 directs the protein to the mitochondrion; that stretch reads MGFGSCSRHALFTPAAFSGSFTTMTTSCFKRVYTAQIHGGDALGKRLPSVSSFSG. Residues 56 to 143 lie on the Mitochondrial matrix side of the membrane; it reads QLPRHGLHRQ…KNNPNVKFRV (88 aa). The interval 71-114 is disordered; sequence STSHRRQTSPPPSPRTTSQSPTVPSKASTTPPTSLNTSKPIATE. Positions 85 to 95 are enriched in low complexity; sequence RTTSQSPTVPS. The segment covering 96–114 has biased composition (polar residues); that stretch reads KASTTPPTSLNTSKPIATE. Residues 144–164 form a helical membrane-spanning segment; sequence IGALTLLVAGKVLNVQVPFFF. The 289-residue stretch at 144 to 432 folds into the ABC transmembrane type-1 domain; that stretch reads IGALTLLVAG…LGTVYRELRQ (289 aa). Over 165–181 the chain is Mitochondrial intermembrane; sequence KTIVDSLNVPITESTTV. The helical transmembrane segment at 182–202 threads the bilayer; it reads WVLAGASIAGYGAARILTTLF. The Mitochondrial matrix segment spans residues 203-262; sequence GELRNAVFASVAQNAIRKVARETFEHLLNMDMKFHLERQTGGLTRAIDRGTKGISFILSS. A helical membrane pass occupies residues 263–283; that stretch reads IVFHVIPTALEISMVCGILSW. Lysine 284 is a topological domain (mitochondrial intermembrane). The helical transmembrane segment at 285–305 threads the bilayer; it reads FGWDFAAVTAITMLLYTWFTI. Topologically, residues 306 to 378 are mitochondrial matrix; it reads KTTAWRTTFR…SLAALNSGQN (73 aa). Residues 311–315 and 374–377 each bind glutathione; these read RTTFR and NSGQ. The helical transmembrane segment at 379–399 threads the bilayer; it reads FIFSSALTMMMLLGAQGIVKG. Residues 400-405 lie on the Mitochondrial intermembrane side of the membrane; that stretch reads TMTVGD. The helical transmembrane segment at 406 to 426 threads the bilayer; the sequence is LVLVNQLVFQLSLPLNFLGTV. Residue glycine 424 coordinates glutathione. Over 427-732 the chain is Mitochondrial matrix; it reads YRELRQSLID…LEVVDEKKKQ (306 aa). Residues 466–702 enclose the ABC transporter domain; the sequence is IEFRNVAFAY…PGGVYHRLWQ (237 aa). ATP-binding positions include tyrosine 475 and 499 to 506; that span reads GPSGCGKS. A disordered region spans residues 708–732; sequence STQPTDEEIERQREELEVVDEKKKQ. Over residues 717–732 the composition is skewed to basic and acidic residues; it reads ERQREELEVVDEKKKQ.

This sequence belongs to the ABC transporter superfamily. ABCB family. Heavy Metal importer (TC 3.A.1.210) subfamily. In terms of assembly, homodimer.

The protein localises to the mitochondrion inner membrane. Performs an essential function in the generation of cytoplasmic iron-sulfur proteins by mediating the ATP-dependent export of mitochondrial Fe/S cluster precursors synthesized by NFS1 and other mitochondrial proteins. Hydrolyzes ATP. Binds glutathione and may function by transporting a glutathione-conjugated iron-sulfur compound. Plays a role during copper stress, in a manner dependent on the copper metalloregulatory transcription factor CUF1. The sequence is that of Iron-sulfur clusters transporter ATM1, mitochondrial from Cryptococcus neoformans var. grubii serotype A (strain H99 / ATCC 208821 / CBS 10515 / FGSC 9487) (Filobasidiella neoformans var. grubii).